The following is a 273-amino-acid chain: Mitochondrial distribution and morphology protein 12 (273 aa).

In terms of domain architecture, SMP-LTD spans 1-273; it reads MSIDFDWSKL…LVWPSYITIE (273 aa). Residues 124–145 form a disordered region; that stretch reads LTSPIPESRPSTPMDNHQERDR.

This sequence belongs to the MDM12 family. In terms of assembly, component of the ER-mitochondria encounter structure (ERMES) or MDM complex, composed of mmm1, mdm10, mdm12 and mdm34. A mmm1 homodimer associates with one molecule of mdm12 on each side in a pairwise head-to-tail manner, and the SMP-LTD domains of mmm1 and mdm12 generate a continuous hydrophobic tunnel for phospholipid trafficking.

It is found in the mitochondrion outer membrane. It localises to the endoplasmic reticulum membrane. Component of the ERMES/MDM complex, which serves as a molecular tether to connect the endoplasmic reticulum (ER) and mitochondria. Components of this complex are involved in the control of mitochondrial shape and protein biogenesis, and function in nonvesicular lipid trafficking between the ER and mitochondria. Mdm12 is required for the interaction of the ER-resident membrane protein mmm1 and the outer mitochondrial membrane-resident beta-barrel protein mdm10. The mdm12-mmm1 subcomplex functions in the major beta-barrel assembly pathway that is responsible for biogenesis of all mitochondrial outer membrane beta-barrel proteins, and acts in a late step after the SAM complex. The mdm10-mdm12-mmm1 subcomplex further acts in the TOM40-specific pathway after the action of the mdm12-mmm1 complex. Essential for establishing and maintaining the structure of mitochondria and maintenance of mtDNA nucleoids. The polypeptide is Mitochondrial distribution and morphology protein 12 (Schizosaccharomyces pombe (strain 972 / ATCC 24843) (Fission yeast)).